The chain runs to 176 residues: MRAYWFDNKEGDQRELHDSGRDVDPEYLEKLGVLYYHFADEKDVDKLASDRSYKNRDVITVSPQKMGDVYEEKVKMFFNEHLHEDEEIRYIRDGAGFFDVRSEGDEWVRIRLEKDDLIILPAGIYHRFTTDDKNYIQAMRLFKEEPKWTPLNRGPEVDANPYRKEYLQTVPAIASQ.

Positions 81, 83, 87, and 126 each coordinate Fe(2+). Ni(2+)-binding residues include His-81, His-83, Glu-87, and His-126.

Belongs to the acireductone dioxygenase (ARD) family. Fe(2+) serves as cofactor. The cofactor is Ni(2+).

The protein resides in the cytoplasm. Its subcellular location is the nucleus. It carries out the reaction 1,2-dihydroxy-5-(methylsulfanyl)pent-1-en-3-one + O2 = 4-methylsulfanyl-2-oxobutanoate + formate + 2 H(+). The catalysed reaction is 1,2-dihydroxy-5-(methylsulfanyl)pent-1-en-3-one + O2 = 3-(methylsulfanyl)propanoate + CO + formate + 2 H(+). The protein operates within amino-acid biosynthesis; L-methionine biosynthesis via salvage pathway; L-methionine from S-methyl-5-thio-alpha-D-ribose 1-phosphate: step 5/6. Catalyzes 2 different reactions between oxygen and the acireductone 1,2-dihydroxy-3-keto-5-methylthiopentene (DHK-MTPene) depending upon the metal bound in the active site. Fe-containing acireductone dioxygenase (Fe-ARD) produces formate and 2-keto-4-methylthiobutyrate (KMTB), the alpha-ketoacid precursor of methionine in the methionine recycle pathway. Ni-containing acireductone dioxygenase (Ni-ARD) produces methylthiopropionate, carbon monoxide and formate, and does not lie on the methionine recycle pathway. This chain is Acireductone dioxygenase (adi1), found in Sclerotinia sclerotiorum (strain ATCC 18683 / 1980 / Ss-1) (White mold).